The primary structure comprises 670 residues: Septation protein 7 (670 aa).

The Septin-type G domain occupies lysine 33–lysine 357. Positions glycine 43–threonine 50 are G1 motif. Residues glycine 43–threonine 50, glycine 137, lysine 217–glutamate 225, and arginine 306 contribute to the GTP site. The tract at residues aspartate 134 to glycine 137 is G3 motif. The tract at residues glycine 216 to aspartate 219 is G4 motif. Disordered regions lie at residues leucine 383–glutamine 513 and leucine 574–histidine 670. The segment covering asparagine 395–asparagine 404 has biased composition (low complexity). Positions alanine 405 to threonine 421 are enriched in polar residues. Low complexity-rich tracts occupy residues serine 433 to serine 446 and serine 463 to serine 473. Positions valine 472–glycine 606 form a coiled coil. Over residues glycine 476 to glycine 487 the composition is skewed to basic and acidic residues. Over residues asparagine 489 to asparagine 500 the composition is skewed to low complexity. Basic and acidic residues predominate over residues glutamine 631–serine 645.

The protein belongs to the TRAFAC class TrmE-Era-EngA-EngB-Septin-like GTPase superfamily. Septin GTPase family. In terms of assembly, component of the septin complex which consists of CDC3, CDC10, CDC11, CDC12 and probably SEP7. The purified septin complex appeared to have a stoichiometry of 2 CDC3, 1 to 2 CDC10, 1 CDC11, 2 CDC12, and 1 or none SEP7 subunit. Induction of hyphal growth brings about important modifications in septin ring dynamics, because the rings were found in a different state from those of yeast cells. This hyphal-specific state contains a core of stable septins (SEP7, CDC3, and CDC12), and it shows a high CDC10 turnover between the ring and the cytoplasm. Interacts with GIN4. In terms of processing, phosphorylated by GIN4 which stabilizes the GIN4-SEP7 interaction.

The protein resides in the bud neck. Septins are GTPases involved in cytokinesis that assemble early in the cell cycle as a patch at the incipient bud site and form a ring before bud emergence, which transforms into an hour-glass shaped collar of cortical filaments that spans both sides of the mother-bud neck. This collar persists until just before cytokinesis, when it splits into two rings that occupy opposite sides of the neck. The septins at the bud neck serve as a structural scaffold that recruits different components involved in diverse processes at specific stages during the cell cycle. Many proteins bind asymmetrically to the septin collar. The septin assembly is regulated by protein kinase GIN4. Septins are also involved in cell morphogenesis, chlamydospores morphogenesis, bud site selection, chitin deposition, cell cycle regulation, cell compartmentalization and spore wall formation. SEP7 is required to convert hyphal septin rings into the hyphal-specific state and is necessary for CDC10 turnover during hyphal growth. In Candida albicans (strain SC5314 / ATCC MYA-2876) (Yeast), this protein is Septation protein 7 (SEP7).